Reading from the N-terminus, the 245-residue chain is Thymidylate kinase (245 aa).

55–62 serves as a coordination point for ATP; it reads GIDGVGKS.

It belongs to the thymidylate kinase family.

It carries out the reaction dTMP + ATP = dTDP + ADP. Its function is as follows. Phosphorylation of dTMP to form dTDP in both de novo and salvage pathways of dTTP synthesis. The protein is Thymidylate kinase of Rhodopirellula baltica (strain DSM 10527 / NCIMB 13988 / SH1).